The primary structure comprises 61 residues: MDIKGLLVILFFVLLITGEVENMKPKKHKYKYKNRKRFLENFEEPLQKRDMNEESYELFNQ.

An N-terminal signal peptide occupies residues 1 to 18 (MDIKGLLVILFFVLLITG).

The protein belongs to the non-disulfide-bridged peptide (NDBP) superfamily. Long chain multifunctional peptide (group 2) family. Expressed by the venom gland.

It is found in the secreted. The sequence is that of Venom protein 22.1 from Lychas mucronatus (Chinese swimming scorpion).